The primary structure comprises 62 residues: Pro-MCH variant (62 aa).

The interval 23–41 (GSVAFPAENGVQDTESTQE) is NGE-like. The tract at residues 29–62 (AENGVQDTESTQEKRETGDEENSAKFPIGRRDFD) is disordered. Residues 44-56 (ETGDEENSAKFPI) form an NEI-like region. Positions 60–62 (DFD) are melanin-concentrating hormone-like.

The protein belongs to the melanin-concentrating hormone family.

The chain is Pro-MCH variant (PMCHL1) from Pan paniscus (Pygmy chimpanzee).